The primary structure comprises 371 residues: Peptide chain release factor 2 (371 aa).

At Q250 the chain carries N5-methylglutamine.

It belongs to the prokaryotic/mitochondrial release factor family. Post-translationally, methylated by PrmC. Methylation increases the termination efficiency of RF2.

The protein resides in the cytoplasm. In terms of biological role, peptide chain release factor 2 directs the termination of translation in response to the peptide chain termination codons UGA and UAA. The chain is Peptide chain release factor 2 from Paramagnetospirillum magneticum (strain ATCC 700264 / AMB-1) (Magnetospirillum magneticum).